We begin with the raw amino-acid sequence, 355 residues long: Tabersonine 16-O-methyltransferase (355 aa).

S-adenosyl-L-methionine contacts are provided by residues 198-201 (IGGG), Asp222, 222-223 (DL), 242-243 (DM), and Lys256. His260 functions as the Proton acceptor in the catalytic mechanism.

It belongs to the class I-like SAM-binding methyltransferase superfamily. Cation-independent O-methyltransferase family. COMT subfamily. Homodimer. In terms of tissue distribution, expressed in leaves and flowers. Detected in stems and roots. In leaves, expressed in epidermal cells.

The protein resides in the cytoplasm. It carries out the reaction 16-hydroxytabersonine + S-adenosyl-L-methionine = 16-methoxytabersonine + S-adenosyl-L-homocysteine + H(+). The protein operates within alkaloid biosynthesis; vindoline biosynthesis. In terms of biological role, 16-O-methyltransferase involved in the biosynthesis of vindoline. Highly specific for 16-hydroxytabersonine. No activity with tabersonine, 3-hydroxytyramine, 4-hydroxytyramine, 5-hydroxytryptamine (5HT), 2,3-dihydro-3-hydroxytabersonine, lochnericine, hoerhammericine, 16-hydroxy-2,3-dihydro-3-hydroxytabersonine, 16-hydroxylochnericine, 16-hydroxyhoerhammericine, quercetin, kaempferol and caffeic acid as substrates. In Catharanthus roseus (Madagascar periwinkle), this protein is Tabersonine 16-O-methyltransferase.